Reading from the N-terminus, the 285-residue chain is 2-oxoglutarate synthase subunit KorB (285 aa).

In terms of assembly, heterotetramer of the KorA, KorB, KorC and KorD subunits.

The catalysed reaction is 2 oxidized [2Fe-2S]-[ferredoxin] + 2-oxoglutarate + CoA = succinyl-CoA + 2 reduced [2Fe-2S]-[ferredoxin] + CO2 + H(+). The sequence is that of 2-oxoglutarate synthase subunit KorB (korB) from Methanothermobacter marburgensis (strain ATCC BAA-927 / DSM 2133 / JCM 14651 / NBRC 100331 / OCM 82 / Marburg) (Methanobacterium thermoautotrophicum).